Consider the following 312-residue polypeptide: Salivary protein SG34 (312 aa).

The N-terminal stretch at 1 to 20 (MSPSKKILVLLLFPILLVSS) is a signal peptide. The stretch at 95-158 (NMEVQLLRES…QEEIEEQTKQ (64 aa)) forms a coiled coil.

This sequence belongs to the salivary protein SG34 family. Female salivary gland (at protein level). Low-level expression in ovary.

Possible serine protease. In terms of biological role, (Microbial infection) Modulates replication of duck Tembusu virus in salivary glands and virus release into the saliva, probably via the regulation of antimicrobial peptides expression in response to virus infection. Its function is as follows. (Microbial infection) Enhances replication of dengue virus type 2 in human keratinocytes, probably by suppressing the production of type I interferons and antimicrobial peptides in response to virus infection. This is Salivary protein SG34 from Aedes aegypti (Yellowfever mosquito).